A 339-amino-acid chain; its full sequence is Ribosomal RNA small subunit methyltransferase C (339 aa).

Belongs to the methyltransferase superfamily. RsmC family. Monomer.

It localises to the cytoplasm. The enzyme catalyses guanosine(1207) in 16S rRNA + S-adenosyl-L-methionine = N(2)-methylguanosine(1207) in 16S rRNA + S-adenosyl-L-homocysteine + H(+). Its function is as follows. Specifically methylates the guanine in position 1207 of 16S rRNA in the 30S particle. The protein is Ribosomal RNA small subunit methyltransferase C of Aliivibrio fischeri (strain MJ11) (Vibrio fischeri).